The sequence spans 297 residues: 4-diphosphocytidyl-2-C-methyl-D-erythritol kinase (297 aa).

Active-site residues include Lys6 and Asp144.

It belongs to the GHMP kinase family. IspE subfamily.

The catalysed reaction is 4-CDP-2-C-methyl-D-erythritol + ATP = 4-CDP-2-C-methyl-D-erythritol 2-phosphate + ADP + H(+). Its pathway is isoprenoid biosynthesis; isopentenyl diphosphate biosynthesis via DXP pathway; isopentenyl diphosphate from 1-deoxy-D-xylulose 5-phosphate: step 3/6. Catalyzes the phosphorylation of the position 2 hydroxy group of 4-diphosphocytidyl-2C-methyl-D-erythritol. The sequence is that of 4-diphosphocytidyl-2-C-methyl-D-erythritol kinase from Leptospira interrogans serogroup Icterohaemorrhagiae serovar copenhageni (strain Fiocruz L1-130).